A 434-amino-acid chain; its full sequence is MSIEKIWAREILDSRGNPTVEVDLYTAKGLFRAAVPSGASTGIYEALELRDGDKQRYLGKGVLKAVDHINSTIAPALISSGLSVVEQEKLDNLMLELDGTENKSKFGANAILGVSLAVCKAGAAERELPLYRHIAQLAGNSDLILPVPAFNVINGGSHAGNKLAMQEFMILPVGAESFRDAMRLGAEVYHTLKGVIKDKYGKDATNVGDEGGFAPNILENSEALELVKEAIDKAGYTEKIVIGMDVAASEFYRDGKYDLDFKSPTDPSRYITGDQLGALYQDFVRDYPVVSIEDPFDQDDWAAWSKFTANVGIQIVGDDLTVTNPKRIERAVEEKACNCLLLKVNQIGSVTEAIQACKLAQENGWGVMVSHRSGETEDTFIADLVVGLCTGQIKTGAPCRSERLAKYNQLMRIEEELGDEARFAGHNFRNPSVL.

Residue serine 2 is modified to N-acetylserine. The residue at position 5 (lysine 5) is an N6-acetyllysine. Phosphothreonine is present on threonine 26. Mg(2+) is bound at residue serine 40. Residue tyrosine 44 is modified to Phosphotyrosine. Lysine 60 is modified (N6-acetyllysine; alternate). At lysine 60 the chain carries N6-succinyllysine; alternate. The residue at position 64 (lysine 64) is an N6-acetyllysine. Position 89 is an N6-acetyllysine; alternate (lysine 89). Lysine 89 bears the N6-succinyllysine; alternate mark. Residues histidine 158 and glutamate 167 each coordinate substrate. An N6-acetyllysine mark is found at lysine 193, lysine 197, and lysine 199. Lysine 202 carries the N6-acetyllysine; alternate modification. Residue lysine 202 forms a Glycyl lysine isopeptide (Lys-Gly) (interchain with G-Cter in SUMO2); alternate linkage. Residue glutamate 210 is the Proton donor of the active site. 2 positions are modified to N6-acetyllysine; alternate: lysine 228 and lysine 233. Lysine 228 is subject to N6-succinyllysine; alternate. N6-(2-hydroxyisobutyryl)lysine; alternate is present on lysine 233. Residue aspartate 245 coordinates Mg(2+). N6-acetyllysine is present on lysine 256. Serine 263 is modified (phosphoserine). Tyrosine 287 is modified (phosphotyrosine). Phosphoserine is present on serine 291. Mg(2+)-binding residues include glutamate 293 and aspartate 318. Substrate contacts are provided by glutamate 293 and aspartate 318. Lysine 335 and lysine 343 each carry N6-acetyllysine. The Proton acceptor role is filled by lysine 343. Substrate contacts are provided by residues 370–373 (SHRS) and lysine 394. Lysine 406 is subject to N6-acetyllysine.

Belongs to the enolase family. In terms of assembly, mammalian enolase is composed of 3 isozyme subunits, alpha, beta and gamma, which can form homodimers or heterodimers which are cell-type and development-specific. It depends on Mg(2+) as a cofactor. The alpha/alpha homodimer is expressed in embryo and in most adult tissues. The alpha/beta heterodimer and the beta/beta homodimer are found in striated muscle, and the alpha/gamma heterodimer and the gamma/gamma homodimer in neurons.

It localises to the cytoplasm. Its subcellular location is the cell membrane. The catalysed reaction is (2R)-2-phosphoglycerate = phosphoenolpyruvate + H2O. It participates in carbohydrate degradation; glycolysis; pyruvate from D-glyceraldehyde 3-phosphate: step 4/5. Its function is as follows. Has neurotrophic and neuroprotective properties on a broad spectrum of central nervous system (CNS) neurons. Binds, in a calcium-dependent manner, to cultured neocortical neurons and promotes cell survival. This Homo sapiens (Human) protein is Gamma-enolase (ENO2).